We begin with the raw amino-acid sequence, 160 residues long: Phosphopantetheine adenylyltransferase (160 aa).

Serine 9 is a substrate binding site. ATP contacts are provided by residues 9-10 and histidine 17; that span reads SF. Substrate-binding residues include lysine 41, leucine 73, and lysine 87. ATP-binding positions include 88-90, glutamate 98, and 123-129; these read GLR and YSYLSSS.

The protein belongs to the bacterial CoaD family. As to quaternary structure, homohexamer. Mg(2+) serves as cofactor.

The protein localises to the cytoplasm. It carries out the reaction (R)-4'-phosphopantetheine + ATP + H(+) = 3'-dephospho-CoA + diphosphate. It functions in the pathway cofactor biosynthesis; coenzyme A biosynthesis; CoA from (R)-pantothenate: step 4/5. Its function is as follows. Reversibly transfers an adenylyl group from ATP to 4'-phosphopantetheine, yielding dephospho-CoA (dPCoA) and pyrophosphate. The sequence is that of Phosphopantetheine adenylyltransferase from Clostridium tetani (strain Massachusetts / E88).